A 734-amino-acid polypeptide reads, in one-letter code: MQSHIGQWTSTAKGHLSRDENGDEKTDYSRWRLVDRQGRQTWRYLESDEENEKSPQTVPEKYFLGLDTGLPDLPKAETPLQAAQDGVSFLSQLQLSSGQWASECTGPMFILPCVIIAWYVTNTPIPPAYAIEIRRYLFARQRVEDGGWGWHVEARSSAIGTALNYVVLRLLGASKDDHRLIQARKLLHSYGGATYAPGIAKFWLCVLGVMKWECVNPFLPEFWLLPDSDPTAPSKWYIHTRTNFTSLSYIWSKQWSFAGDEVTKQLQTELYPEPYSAIDFAAHRTSLAEVDNNYPKWWLVNLMNWLTVAVYIPYMRKKATVESAEQRVWELIQAEDKNSEFIGLSPISKAANMIACYIHDGKDSESVRSHGETIFQYFWMNGEGMACNLSDGIQVWDTSLAVQAIAAAGGAGNPRFQSTVIKAHEFLEDHQLLDDVQDQEMCCRGHRKGGWPFSTKYQGYMISECTGEGLRSILQLQKTFQLDLKKRIPADRLHNAVDCLLNLQNDTGGFGVYEKRQGSLKLAWLEMGEFSGKTMVTYDYVECTTAVVSALASFSEFYPDYRKEEVQTARTRGLEFIKSSQKPYGGWHGAWGVCFTYAGMFALESLALAGETYSNSEPSRKGCTFLVSKQRDDGGWGESYLSFQKEEYIEHEDAQVVQTAWACLGLMHAEYPDKTPVKRGLKLIMSRQQSKGHWLQEQYEGGVGDGVISYSNYKLYWPVRALAEYVRRFGNEEM.

Residues 1 to 12 (MQSHIGQWTSTA) are compositionally biased toward polar residues. Positions 1–26 (MQSHIGQWTSTAKGHLSRDENGDEKT) are disordered. The span at 16–26 (LSRDENGDEKT) shows a compositional bias: basic and acidic residues. PFTB repeat units follow at residues 130–172 (AIEI…RLLG), 493–534 (LHNA…SGKT), 570–610 (RTRG…ALAG), and 619–668 (SRKG…GLMH).

Belongs to the terpene cyclase/mutase family.

It functions in the pathway secondary metabolite biosynthesis; terpenoid biosynthesis. Functionally, terpene cyclase/mutase; part of the gene cluster that mediates the biosynthesis of the meroterpenoids nectripenoids A and B, as well as cochliquninone D and isocochliquninone E. The pathway probably begins with the HR-PKS ntnH that catalyzes two chain-extension steps to form a reduced triketide, which then primes the SAT domain in the NR-PKS ntnG to initiate three more cycles of extension to give a linear hexaketide corresponding to the polyketide part of nectripenoids. The FAD-dependent monooxygenase ntnJ then performs an oxidative decarboxylation at C11 of the ntnH/ntnG product, via an electrophilic aromatic hydroxylation with concomitant ipso-decarboxylation. The membrane-bound polyprenyl transferase ntnF then introduces a farnesyl group before the FAD-dependent monooxygenase ntnK functions as the first epoxidase on terminal C12'-C13' olefin, followed by a second epoxidation on C7'-C8' catalyzed by ntnA. The terpene cyclase/mutase ntnI then initiates the sequential tricyclic ring formation through protonation of the terminal epoxide and catalyzes the regioselective and stereoselective 6/6/6-tricyclic ring formation. The cytochrome P450 monooxygenase ntnM may then hydroxylate C1'. The protein is Terpene cyclase/mutase ntnI of Nectria sp.